The following is a 201-amino-acid chain: Ras-related protein Rab-10 (201 aa).

16–23 (GDSGVGKT) lines the GTP pocket. Residues 38 to 46 (FISTIGIDF) carry the Effector region motif. GTP is bound by residues 64–68 (DTAGQ), 122–125 (NKCD), and 152–154 (SAK). Residues 175–201 (PDSTDEQSRDTVNPVQPQRQSSSGGCC) are disordered. The segment covering 184–201 (DTVNPVQPQRQSSSGGCC) has biased composition (polar residues). Residues C200 and C201 are each lipidated (S-geranylgeranyl cysteine).

Belongs to the small GTPase superfamily. Rab family. In terms of assembly, interacts (GTP-bound form) with ehbp-1 (via C-terminal coiled coil). Interacts (GTP-bound form) with cnt-1 (via C-terminal ankyrin repeat). Interacts (GTP-bound form) with rab-5 GAP, tbc-2 (via putative coiled coil domain). Interacts (GTP-bound form) with amph-1. As to expression, almost ubiquitously expressed. Expressed in intestine, hypodermis, seam cells, body-wall muscles, many neurons, oviduct sheath cell, spermatheca, coelomocytes and pharyngeal and nerve ring.

It localises to the early endosome membrane. Its subcellular location is the late endosome membrane. The protein localises to the golgi apparatus membrane. The protein resides in the endosome membrane. It catalyses the reaction GTP + H2O = GDP + phosphate + H(+). With respect to regulation, rab activation is generally mediated by a guanine exchange factor (GEF), while inactivation through hydrolysis of bound GTP is catalyzed by a GTPase activating protein (GAP). Tbc-4 is a likely GAP of this rab. Denn-4 is a putative GEF of this rab. Its function is as follows. The small GTPases Rab are key regulators of intracellular membrane trafficking, from the formation of transport vesicles to their fusion with membranes. Rabs cycle between an inactive GDP-bound form and an active GTP-bound form that is able to recruit to membranes different set of downstream effectors directly responsible for vesicle formation, movement, tethering and fusion. Required for basolateral endocytic recycling, the return of macromolecules and fluid from endosomes to the plasma membrane, in polarized epithelial cells of the intestine upstream of rme-1. Involved in the formation of the endosomal tubular network that is required for basolateral recycling of clathrin-independent endocytic cargo such as daf-4 in the intestine. Required for the recruitment of cnt-1 effector to endosomal membranes in the intestinal epithelium, which is important for the regulation of levels of endosomal phosphatidylinositol-4,5-bisphosphate, a key phosphoinositide in membrane traffic, and for the recruitment of endosomal membrane-bending proteins, rme-1 and sdpn-1. Recruits the rab-5 GTPase-activating protein tbc-2 to endosomes where it then inactivates rab-5 resulting in removal of rab-5 from membranes, which is necessary for cargo transport from early endosomes to recycling endosomes in the basolateral intestine. Regulates recycling of synaptic membrane AMPA glutamate receptor, glr-1, from intracellular endosomal compartments back to synapses in a cholesterol-dependent endocytosis pathway functioning after clathrin-independent endocytosis in command interneurons. Regulates neuropeptide release from dense core vesicles (DCVs) of cholinergic motoneurons in cooperation with rab-5. They reciprocally recruit each other's inactivating GAP molecule leading to local exclusion of one or the other rab protein at the Golgi-endosomal interphase at an essential stage during DCV sorting. Regulates membrane trafficking of membranes and dendrite proteins from the Golgi and/or endosomal compartments to plasma membrane during dendrite morphogenesis together with the exocyst complex in the multi-dendritic PVD sensory neurons acting in a cell-autonomous manner and requiring its GTPase activity. Functions cell-autonomously together with the exocyst complex to regulate dendrite morphogenesis and anterior-posterior patterning of the PVD neurons dendritic arbor by balancing the anterograde and retrograde transport via molecular motors unc-116 (kinesin heavy chain) and dhc-1 (dynein heavy chain) to appropriately transport branching factors, such as dma-1, to the specific subcellular regions of the developing dendrite in its GTPase activity-dependent manner. This is Ras-related protein Rab-10 from Caenorhabditis elegans.